Reading from the N-terminus, the 63-residue chain is Large ribosomal subunit protein uL29 (63 aa).

This sequence belongs to the universal ribosomal protein uL29 family.

The protein is Large ribosomal subunit protein uL29 of Pseudomonas fluorescens (strain ATCC BAA-477 / NRRL B-23932 / Pf-5).